We begin with the raw amino-acid sequence, 278 residues long: Urease accessory protein UreD 3 (278 aa).

This sequence belongs to the UreD family. UreD, UreF and UreG form a complex that acts as a GTP-hydrolysis-dependent molecular chaperone, activating the urease apoprotein by helping to assemble the nickel containing metallocenter of UreC. The UreE protein probably delivers the nickel.

The protein resides in the cytoplasm. In terms of biological role, required for maturation of urease via the functional incorporation of the urease nickel metallocenter. This Bradyrhizobium sp. (strain BTAi1 / ATCC BAA-1182) protein is Urease accessory protein UreD 3.